Consider the following 263-residue polypeptide: 4-hydroxy-tetrahydrodipicolinate reductase (263 aa).

NAD(+) contacts are provided by residues 7–12 (GFKGRM), 96–98 (GTT), and 122–125 (APNF). Histidine 152 acts as the Proton donor/acceptor in catalysis. Residue histidine 153 participates in (S)-2,3,4,5-tetrahydrodipicolinate binding. Catalysis depends on lysine 156, which acts as the Proton donor. A (S)-2,3,4,5-tetrahydrodipicolinate-binding site is contributed by 162–163 (GT).

The protein belongs to the DapB family.

The protein resides in the cytoplasm. The enzyme catalyses (S)-2,3,4,5-tetrahydrodipicolinate + NAD(+) + H2O = (2S,4S)-4-hydroxy-2,3,4,5-tetrahydrodipicolinate + NADH + H(+). The catalysed reaction is (S)-2,3,4,5-tetrahydrodipicolinate + NADP(+) + H2O = (2S,4S)-4-hydroxy-2,3,4,5-tetrahydrodipicolinate + NADPH + H(+). It functions in the pathway amino-acid biosynthesis; L-lysine biosynthesis via DAP pathway; (S)-tetrahydrodipicolinate from L-aspartate: step 4/4. Functionally, catalyzes the conversion of 4-hydroxy-tetrahydrodipicolinate (HTPA) to tetrahydrodipicolinate. This Listeria welshimeri serovar 6b (strain ATCC 35897 / DSM 20650 / CCUG 15529 / CIP 8149 / NCTC 11857 / SLCC 5334 / V8) protein is 4-hydroxy-tetrahydrodipicolinate reductase.